The sequence spans 987 residues: Valine--tRNA ligase (987 aa).

A 'HIGH' region motif is present at residues 45 to 55; the sequence is PNVTGSLHMGH. The short motif at 634-638 is the 'KMSKS' region element; it reads KMSKS. Lys637 is a binding site for ATP. The stretch at 917-985 forms a coiled coil; that stretch reads VIDIGAEKAR…LSAALARLSE (69 aa).

This sequence belongs to the class-I aminoacyl-tRNA synthetase family. ValS type 1 subfamily. Monomer.

It localises to the cytoplasm. It carries out the reaction tRNA(Val) + L-valine + ATP = L-valyl-tRNA(Val) + AMP + diphosphate. Catalyzes the attachment of valine to tRNA(Val). As ValRS can inadvertently accommodate and process structurally similar amino acids such as threonine, to avoid such errors, it has a 'posttransfer' editing activity that hydrolyzes mischarged Thr-tRNA(Val) in a tRNA-dependent manner. The chain is Valine--tRNA ligase from Cereibacter sphaeroides (strain ATCC 17029 / ATH 2.4.9) (Rhodobacter sphaeroides).